Here is a 393-residue protein sequence, read N- to C-terminus: Putative competence-damage inducible protein (393 aa).

This sequence belongs to the CinA family.

The polypeptide is Putative competence-damage inducible protein (Streptococcus suis (strain 05ZYH33)).